The following is a 738-amino-acid chain: Catalase-peroxidase (738 aa).

Over residues 1 to 16 (MSENHDAIVTDAKTEE) the composition is skewed to basic and acidic residues. The tract at residues 1–37 (MSENHDAIVTDAKTEEAGGCPVAHGRAPHPTQGGGNR) is disordered. Positions 108–231 (WHSAGTYRIS…LGAVQMGLIY (124 aa)) form a cross-link, tryptophyl-tyrosyl-methioninium (Trp-Tyr) (with M-257). The Proton acceptor role is filled by histidine 109. The tryptophyl-tyrosyl-methioninium (Tyr-Met) (with W-108) cross-link spans 231–257 (YVNPEGPNGNPDPIAAARDIRETFGRM). Histidine 272 contributes to the heme b binding site.

This sequence belongs to the peroxidase family. Peroxidase/catalase subfamily. Homodimer or homotetramer. Heme b is required as a cofactor. Post-translationally, formation of the three residue Trp-Tyr-Met cross-link is important for the catalase, but not the peroxidase activity of the enzyme.

The catalysed reaction is H2O2 + AH2 = A + 2 H2O. The enzyme catalyses 2 H2O2 = O2 + 2 H2O. In terms of biological role, bifunctional enzyme with both catalase and broad-spectrum peroxidase activity. This Streptomyces ambofaciens protein is Catalase-peroxidase.